Reading from the N-terminus, the 559-residue chain is Dihydroxy-acid dehydratase (559 aa).

Aspartate 81 contributes to the Mg(2+) binding site. Residue cysteine 122 coordinates [2Fe-2S] cluster. Mg(2+) is bound by residues aspartate 123 and lysine 124. Lysine 124 bears the N6-carboxylysine mark. Position 195 (cysteine 195) interacts with [2Fe-2S] cluster. Glutamate 448 is a Mg(2+) binding site. The active-site Proton acceptor is the serine 474.

This sequence belongs to the IlvD/Edd family. In terms of assembly, homodimer. [2Fe-2S] cluster is required as a cofactor. It depends on Mg(2+) as a cofactor.

It carries out the reaction (2R)-2,3-dihydroxy-3-methylbutanoate = 3-methyl-2-oxobutanoate + H2O. The catalysed reaction is (2R,3R)-2,3-dihydroxy-3-methylpentanoate = (S)-3-methyl-2-oxopentanoate + H2O. The protein operates within amino-acid biosynthesis; L-isoleucine biosynthesis; L-isoleucine from 2-oxobutanoate: step 3/4. Its pathway is amino-acid biosynthesis; L-valine biosynthesis; L-valine from pyruvate: step 3/4. Functionally, functions in the biosynthesis of branched-chain amino acids. Catalyzes the dehydration of (2R,3R)-2,3-dihydroxy-3-methylpentanoate (2,3-dihydroxy-3-methylvalerate) into 2-oxo-3-methylpentanoate (2-oxo-3-methylvalerate) and of (2R)-2,3-dihydroxy-3-methylbutanoate (2,3-dihydroxyisovalerate) into 2-oxo-3-methylbutanoate (2-oxoisovalerate), the penultimate precursor to L-isoleucine and L-valine, respectively. The protein is Dihydroxy-acid dehydratase of Geobacillus kaustophilus (strain HTA426).